A 278-amino-acid chain; its full sequence is Phosphatidylglycerol--prolipoprotein diacylglyceryl transferase (278 aa).

Transmembrane regions (helical) follow at residues 18–38 (IQVH…TILA), 55–75 (LILW…VIFE), 90–110 (WDGG…VYLF), and 115–135 (WIPV…AQGI). Arg-137 contacts a 1,2-diacyl-sn-glycero-3-phospho-(1'-sn-glycerol). Helical transmembrane passes span 177–197 (QPTF…LMSL), 207–227 (GEVF…VEGM), and 237–257 (IRVS…ILVF).

This sequence belongs to the Lgt family.

It localises to the cell membrane. The enzyme catalyses L-cysteinyl-[prolipoprotein] + a 1,2-diacyl-sn-glycero-3-phospho-(1'-sn-glycerol) = an S-1,2-diacyl-sn-glyceryl-L-cysteinyl-[prolipoprotein] + sn-glycerol 1-phosphate + H(+). It functions in the pathway protein modification; lipoprotein biosynthesis (diacylglyceryl transfer). In terms of biological role, catalyzes the transfer of the diacylglyceryl group from phosphatidylglycerol to the sulfhydryl group of the N-terminal cysteine of a prolipoprotein, the first step in the formation of mature lipoproteins. This Pediococcus pentosaceus (strain ATCC 25745 / CCUG 21536 / LMG 10740 / 183-1w) protein is Phosphatidylglycerol--prolipoprotein diacylglyceryl transferase.